The following is a 314-amino-acid chain: Dihydroorotate dehydrogenase (fumarate) (314 aa).

Residues K46, 70 to 74 (NSMGL), and N130 each bind substrate. 46-47 (KS) is a binding site for FMN. N130 contributes to the FMN binding site. Catalysis depends on nucleophile residues S132 and C133. FMN is bound by residues K167 and I195. 196 to 197 (NS) contributes to the substrate binding site. Residues G224, 252-253 (GG), and 274-275 (GT) contribute to the FMN site.

It belongs to the dihydroorotate dehydrogenase family. Type 1 subfamily. As to quaternary structure, homodimer. FMN serves as cofactor.

The protein resides in the cytoplasm. The catalysed reaction is (S)-dihydroorotate + fumarate = orotate + succinate. The protein operates within pyrimidine metabolism; UMP biosynthesis via de novo pathway. Catalyzes the conversion of dihydroorotate to orotate with fumarate as the electron acceptor. The sequence is that of Dihydroorotate dehydrogenase (fumarate) (URA1) from Saccharomyces bayanus (Yeast).